The chain runs to 358 residues: MEKVLIWFCGTGTTKQDFLANVEISGFSAIVAIDGIGTAAMLTKTQALAKRANWGGSFVDMSETLGVLYDQVNGYDDRAGVVTLDSLFPLVDYLKTLKEYQLVVGGHSRGAAVGLTEFLAELYHLAVQNQAPGVWANAKTIRLVVVDPVQGQQDADKDTNAFNAILKDKTLAQILAELETKWFGGREVFDTLVYSARYDARSSFAFDSRWYRFITEQMGKQAGPAKRAKLVMAGFRHSAPVSKEDEISALYQGKGVAPIAFLQQLVSFDPNWEQSARLLSQIENGYLDQLAAGAKTDLISQLDKQTSLLSTALPALSAANRCKKRCRRITRKNRNTAGSTAISTGRRRFNASYQVTSD.

The protein localises to the secreted. The chain is Extracellular phospholipase C (plcA) from Dickeya chrysanthemi (Pectobacterium chrysanthemi).